The chain runs to 315 residues: Ornithine carbamoyltransferase (315 aa).

Carbamoyl phosphate-binding positions include 53 to 56 (STRT), Gln80, Arg104, and 131 to 134 (HPCQ). Residues Asn163, Asp227, and 231–232 (SM) contribute to the L-ornithine site. Carbamoyl phosphate-binding positions include 267 to 268 (CL) and Arg295.

The protein belongs to the aspartate/ornithine carbamoyltransferase superfamily. OTCase family.

The protein localises to the cytoplasm. The enzyme catalyses carbamoyl phosphate + L-ornithine = L-citrulline + phosphate + H(+). The protein operates within amino-acid degradation; L-arginine degradation via ADI pathway; carbamoyl phosphate from L-arginine: step 2/2. Reversibly catalyzes the transfer of the carbamoyl group from carbamoyl phosphate (CP) to the N(epsilon) atom of ornithine (ORN) to produce L-citrulline. The polypeptide is Ornithine carbamoyltransferase (Rhodococcus opacus (strain B4)).